The chain runs to 388 residues: Processive diacylglycerol beta-glucosyltransferase (388 aa).

Belongs to the glycosyltransferase 28 family. UgtP subfamily.

It localises to the cell membrane. It catalyses the reaction a 1,2-diacyl-3-O-(beta-D-glucopyranosyl)-sn-glycerol + UDP-alpha-D-glucose = a 1,2-diacyl-3-O-(beta-D-Glc-(1-&gt;6)-beta-D-Glc)-sn-glycerol + UDP + H(+). The enzyme catalyses a 1,2-diacyl-3-O-(beta-D-Glc-(1-&gt;6)-beta-D-Glc)-sn-glycerol + UDP-alpha-D-glucose = a 1,2-diacyl-3-O-(beta-D-Glc-(1-&gt;6)-beta-D-Glc-(1-&gt;6)-beta-D-Glc)-sn-glycerol + UDP + H(+). The catalysed reaction is a 1,2-diacyl-sn-glycerol + UDP-alpha-D-glucose = a 1,2-diacyl-3-O-(beta-D-glucopyranosyl)-sn-glycerol + UDP + H(+). The protein operates within glycolipid metabolism; diglucosyl-diacylglycerol biosynthesis. Functionally, processive glucosyltransferase involved in the biosynthesis of both the bilayer- and non-bilayer-forming membrane glucolipids. Is able to successively transfer up to three glucosyl residues to diacylglycerol (DAG), thereby catalyzing the formation of beta-monoglucosyl-DAG (3-O-(beta-D-glucopyranosyl)-1,2-diacyl-sn-glycerol), beta-diglucosyl-DAG (3-O-(beta-D-glucopyranosyl-beta-(1-&gt;6)-D-glucopyranosyl)-1,2-diacyl-sn-glycerol) and beta-triglucosyl-DAG (3-O-(beta-D-glucopyranosyl-beta-(1-&gt;6)-D-glucopyranosyl-beta-(1-&gt;6)-D-glucopyranosyl)-1,2-diacyl-sn-glycerol). Beta-diglucosyl-DAG is the predominant glycolipid found in Bacillales and is also used as a membrane anchor for lipoteichoic acid (LTA). The protein is Processive diacylglycerol beta-glucosyltransferase of Bacillus mycoides (strain KBAB4) (Bacillus weihenstephanensis).